The sequence spans 257 residues: 1-(5-phosphoribosyl)-5-[(5-phosphoribosylamino)methylideneamino] imidazole-4-carboxamide isomerase (257 aa).

The Proton acceptor role is filled by D8. D131 serves as the catalytic Proton donor.

Belongs to the HisA/HisF family.

The protein localises to the cytoplasm. It catalyses the reaction 1-(5-phospho-beta-D-ribosyl)-5-[(5-phospho-beta-D-ribosylamino)methylideneamino]imidazole-4-carboxamide = 5-[(5-phospho-1-deoxy-D-ribulos-1-ylimino)methylamino]-1-(5-phospho-beta-D-ribosyl)imidazole-4-carboxamide. Its pathway is amino-acid biosynthesis; L-histidine biosynthesis; L-histidine from 5-phospho-alpha-D-ribose 1-diphosphate: step 4/9. In Nitrosospira multiformis (strain ATCC 25196 / NCIMB 11849 / C 71), this protein is 1-(5-phosphoribosyl)-5-[(5-phosphoribosylamino)methylideneamino] imidazole-4-carboxamide isomerase.